Here is a 273-residue protein sequence, read N- to C-terminus: Nickel import ATP-binding protein NikE (273 aa).

Positions 13–252 (YRTGGLLRKR…AHPVGRQLQA (240 aa)) constitute an ABC transporter domain. 45–52 (GSSGSGKS) lines the ATP pocket.

Belongs to the ABC transporter superfamily. Nickel importer (TC 3.A.1.5.3) family. As to quaternary structure, the complex is composed of two ATP-binding proteins (NikD and NikE), two transmembrane proteins (NikB and NikC) and a solute-binding protein (NikA).

It is found in the cell inner membrane. It carries out the reaction Ni(2+)(out) + ATP + H2O = Ni(2+)(in) + ADP + phosphate + H(+). Its function is as follows. Part of the ABC transporter complex NikABCDE involved in nickel import. Responsible for energy coupling to the transport system. The protein is Nickel import ATP-binding protein NikE of Pseudomonas putida (strain ATCC 47054 / DSM 6125 / CFBP 8728 / NCIMB 11950 / KT2440).